The primary structure comprises 475 residues: MLTPISIEKEHIRLINLLHFINEQNRWFTIKELSDYLQVADKTVRKYLKLLEDEIPPSWNLLVQKGKGIYLKKPLNESLSFVESKILRKSLNLQICEELVFKKNSMQSLAQKLHLQVGALYPIINQINYDIQSSHLNIKKKPLEISGREQDVRVFMLRLYCNIPNDYWPFPYINKQNITDLINKMEKILNVQMYTYSKHKLCVLFAITISRLLSGNTIDNVSGLILVNKNDDHYKTVASITSELQNSFGVTLHETEISFLALALLLSLGNSITTDSNKTLTSYKKTIMPLAKEITKGIEHKLQLGINYDESFLTYVVLIIKKALDKNFIQYYNYNIKFIRHIKQRHPNTFNTIQECISNLNYTVYSHFDCYEISLLTMHFETQRMLFKNNPKKIYVYTSQGCIHREYISALLEKRYNGLIKIVRNTIINLTNESLQDMEIDIIISNVNLPIKNIPIVQISEFPTERDFHEIKKII.

PRD domains follow at residues 169-274 (PFPY…SITT) and 282-390 (SYKK…FKNN).

This sequence belongs to the AtxA/AcpA family.

In terms of biological role, acts in trans to stimulate anthrax toxins expression. It activates the transcription of the pagA, cya and lef genes. It also activates capB, a gene required for capsule production. The protein is Anthrax toxin expression trans-acting positive regulator (atxA) of Bacillus anthracis.